The primary structure comprises 316 residues: MDILLANPRGFCAGVNRAIQIVDRALELFGAPIYVRHEVVHNRHVVEDLRARGAIFVEELDEVPDAATVIFSAHGVPIAVREHAAARGLSVFDATCPLVTKVHMEVKKYSRDGMEMVLIGHAGHPEVEGTMGQVEEGMMYLVSNVSDVATLAPRNPDKLAYITQTTLSMDDTAEVIVALRSRFPLIEGPKKDDICYATQNRQDAVKSLAPDVDILLVVGAPNSSNSSRLAELGTRLGTQTHLIEDAQQLRREWFEGVGKIGISAGASAPESLVQEIMDTLRGWGARVPQEMPGVEEKVTFSLPLALIQAQTRREGA.

C12 is a binding site for [4Fe-4S] cluster. H41 and H74 together coordinate (2E)-4-hydroxy-3-methylbut-2-enyl diphosphate. Positions 41 and 74 each coordinate dimethylallyl diphosphate. Positions 41 and 74 each coordinate isopentenyl diphosphate. C96 is a binding site for [4Fe-4S] cluster. Residue H124 participates in (2E)-4-hydroxy-3-methylbut-2-enyl diphosphate binding. H124 lines the dimethylallyl diphosphate pocket. Residue H124 participates in isopentenyl diphosphate binding. The active-site Proton donor is the E126. T165 contacts (2E)-4-hydroxy-3-methylbut-2-enyl diphosphate. [4Fe-4S] cluster is bound at residue C195. Residues S223, S224, N225, and S267 each contribute to the (2E)-4-hydroxy-3-methylbut-2-enyl diphosphate site. S223, S224, N225, and S267 together coordinate dimethylallyl diphosphate. Residues S223, S224, N225, and S267 each contribute to the isopentenyl diphosphate site.

Belongs to the IspH family. It depends on [4Fe-4S] cluster as a cofactor.

It carries out the reaction isopentenyl diphosphate + 2 oxidized [2Fe-2S]-[ferredoxin] + H2O = (2E)-4-hydroxy-3-methylbut-2-enyl diphosphate + 2 reduced [2Fe-2S]-[ferredoxin] + 2 H(+). It catalyses the reaction dimethylallyl diphosphate + 2 oxidized [2Fe-2S]-[ferredoxin] + H2O = (2E)-4-hydroxy-3-methylbut-2-enyl diphosphate + 2 reduced [2Fe-2S]-[ferredoxin] + 2 H(+). It participates in isoprenoid biosynthesis; dimethylallyl diphosphate biosynthesis; dimethylallyl diphosphate from (2E)-4-hydroxy-3-methylbutenyl diphosphate: step 1/1. Its pathway is isoprenoid biosynthesis; isopentenyl diphosphate biosynthesis via DXP pathway; isopentenyl diphosphate from 1-deoxy-D-xylulose 5-phosphate: step 6/6. Catalyzes the conversion of 1-hydroxy-2-methyl-2-(E)-butenyl 4-diphosphate (HMBPP) into a mixture of isopentenyl diphosphate (IPP) and dimethylallyl diphosphate (DMAPP). Acts in the terminal step of the DOXP/MEP pathway for isoprenoid precursor biosynthesis. The sequence is that of 4-hydroxy-3-methylbut-2-enyl diphosphate reductase from Acidithiobacillus ferrooxidans (strain ATCC 53993 / BNL-5-31) (Leptospirillum ferrooxidans (ATCC 53993)).